The primary structure comprises 134 residues: Cytochrome b5 (134 aa).

The region spanning 6–82 is the Cytochrome b5 heme-binding domain; it reads TKTFTRAEVA…MKKYKIGELV (77 aa). Positions 41 and 65 each coordinate heme. The disordered stretch occupies residues 86–105; the sequence is RTSVAQKSEPTWSTEQQTEE. Over residues 87-105 the composition is skewed to polar residues; it reads TSVAQKSEPTWSTEQQTEE. A helical membrane pass occupies residues 111–131; the sequence is WLVPLVLCLVATLFYKFFFGG.

Belongs to the cytochrome b5 family.

The protein resides in the endoplasmic reticulum membrane. It is found in the microsome membrane. In terms of biological role, cytochrome b5 is a membrane-bound hemoprotein which functions as an electron carrier for several membrane-bound oxygenases. The sequence is that of Cytochrome b5 (Cyt-b5) from Drosophila melanogaster (Fruit fly).